The sequence spans 515 residues: Cytochrome P450 monooxygenase ptmJ (515 aa).

A run of 4 helical transmembrane segments spans residues 6 to 26 (LGPF…LFVI), 50 to 70 (LGVV…LFCV), 82 to 102 (VFYL…EPVV), and 300 to 320 (VIIL…LFLH). Position 449 (C449) interacts with heme.

This sequence belongs to the cytochrome P450 family. It depends on heme as a cofactor.

The protein localises to the membrane. It functions in the pathway secondary metabolite biosynthesis. Functionally, cytochrome P450 monooxygenase; part of the gene cluster that mediates the biosynthesis of the indole diterpenes penitrems. The geranylgeranyl diphosphate (GGPP) synthase ptmG catalyzes the first step in penitrem biosynthesis via conversion of farnesyl pyrophosphate and isopentyl pyrophosphate into geranylgeranyl pyrophosphate (GGPP). Condensation of indole-3-glycerol phosphate with GGPP by the prenyl transferase ptmC then forms 3-geranylgeranylindole (3-GGI). Epoxidation by the FAD-dependent monooxygenase ptmM leads to a epoxidized-GGI that is substrate of the terpene cyclase ptmB for cyclization to yield paspaline. Paspaline is subsequently converted to 13-desoxypaxilline by the cytochrome P450 monooxygenase ptmP, the latter being then converted to paxilline by the cytochrome P450 monooxygenase ptmQ. Paxilline is converted to beta-paxitriol via C-10 ketoreduction by the short-chain dehydrogenase ptmH which can be monoprenylated at the C-20 by the indole diterpene prenyltransferase ptmD. A two-step elimination (acetylation and elimination) process performed by the O-acetyltransferase ptmV and ptmI leads to the production of the prenylated form of penijanthine. The FAD-linked oxidoreductase ptmO then converts the prenylated form of penijanthine into PC-M5 which is in turn transformed into PC-M4 by the aromatic dimethylallyltransferase ptmE. Five sequential oxidative transformations performed by the cytochrome P450 monooxygenases ptmK, ptmU, ptmL, ptmN and ptmJ yield the various penitrem compounds. PtmK, ptmU and ptmM are involved in the formation of the key bicyclic ring of penitrem C via the formation of the intermediates secopenitrem D and penitrem D. PtmL catalyzes the epoxidation of penitrem D and C to yield penitrem B and F, respectively. PtmJ catalyzes the last benzylic hydroxylation to convert penitrem B to prenitrem E and penitrem F to penitrem A. The protein is Cytochrome P450 monooxygenase ptmJ of Penicillium ochrochloron.